A 207-amino-acid polypeptide reads, in one-letter code: Large ribosomal subunit protein uL4 (207 aa).

Residues 56–75 (EVSGTTKKPFKQKGTGNARQ) form a disordered region.

Belongs to the universal ribosomal protein uL4 family. In terms of assembly, part of the 50S ribosomal subunit.

In terms of biological role, one of the primary rRNA binding proteins, this protein initially binds near the 5'-end of the 23S rRNA. It is important during the early stages of 50S assembly. It makes multiple contacts with different domains of the 23S rRNA in the assembled 50S subunit and ribosome. Its function is as follows. Forms part of the polypeptide exit tunnel. The chain is Large ribosomal subunit protein uL4 from Rickettsia prowazekii (strain Madrid E).